A 652-amino-acid polypeptide reads, in one-letter code: Sodium-dependent phosphate transporter 2 (652 aa).

Topologically, residues 1–5 (MAMDE) are extracellular. The helical transmembrane segment at 6 to 26 (YLWMVILGFIIAFILAFSVGA) threads the bilayer. Residues 27–46 (NDVANSFGTAVGSGVVTLRQ) are Cytoplasmic-facing. A helical membrane pass occupies residues 47-67 (ACILASIFETTGSVLLGAKVG). Over 68–86 (ETIRKGIIDVNLYNETVET) the chain is Extracellular. An N-linked (GlcNAc...) asparagine glycan is attached at asparagine 81. The chain crosses the membrane as a helical span at residues 87 to 107 (LMAGEVSAMVGSAVWQLIASF). Topologically, residues 108 to 109 (LR) are cytoplasmic. The chain crosses the membrane as a helical span at residues 110–130 (LPISGTHCIVGSTIGFSLVAI). Topologically, residues 131 to 142 (GTKGVQWMELVK) are extracellular. The chain crosses the membrane as a helical span at residues 143-163 (IVASWFISPLLSGFMSGLLFV). The Cytoplasmic segment spans residues 164–190 (LIRIFILKKEDPVPNGLRALPVFYAAT). A helical transmembrane segment spans residues 191-211 (IAINVFSIMYTGAPVLGLVLP). The Extracellular portion of the chain corresponds to 212 to 213 (MW). The helical transmembrane segment at 214 to 234 (AIALISFGVALLFAFFVWLFV) threads the bilayer. Over 235 to 482 (CPWMRRKITG…EEKEEKDAPE (248 aa)) the chain is Cytoplasmic. Serine 253, serine 256, serine 259, and serine 268 each carry phosphoserine. The tract at residues 273-307 (ELPGAKANDDSTIPLTGAAGETLGTSEGTSAGSHP) is disordered. Over residues 295–304 (LGTSEGTSAG) the composition is skewed to polar residues. A phosphoserine mark is found at serine 316 and serine 385. The interval 458–477 (SELADPDQPREDPAEEEKEE) is disordered. A helical membrane pass occupies residues 483 to 503 (VHLLFHFLQVLTACFGSFAHG). Over 504-530 (GNDVSNAIGPLVALWLIYKQGGVTQEA) the chain is Extracellular. The chain crosses the membrane as a helical span at residues 531-551 (ATPVWLLFYGGVGICTGLWVW). At 552–571 (GRRVIQTMGKDLTPITPSSG) the chain is on the cytoplasmic side. Residues 572 to 586 (FTIELASAFTVVIAS) traverse the membrane as a helical segment. Topologically, residues 587–593 (NIGLPVS) are extracellular. Residues 594 to 609 (TTHCKVGSVVAVGWIR) traverse the membrane as a helical segment. Topologically, residues 610 to 621 (SRKAVDWRLFRN) are cytoplasmic. The helical transmembrane segment at 622–642 (IFVAWFVTVPVAGLFSAAVMA) threads the bilayer. Residues 643 to 652 (LLMYGILPYV) are Extracellular-facing.

This sequence belongs to the inorganic phosphate transporter (PiT) (TC 2.A.20) family. Homodimer. Ubiquitously expressed.

It is found in the cell membrane. Its subcellular location is the apical cell membrane. It carries out the reaction 2 Na(+)(out) + phosphate(out) = 2 Na(+)(in) + phosphate(in). Sodium-phosphate symporter which preferentially transports the monovalent form of phosphate with a stoichiometry of two sodium ions per phosphate ion. Plays a critical role in the determination of bone quality and strength by providing phosphate for bone mineralization. Required to maintain normal cerebrospinal fluid phosphate levels. Mediates phosphate-induced calcification of vascular smooth muscle cells (VCMCs) and can functionally compensate for loss of SLC20A1 in VCMCs. Functionally, (Microbial infection) Functions as a retroviral receptor and confers human cells susceptibility to infection to amphotropic murine leukemia virus (A-MuLV), 10A1 murine leukemia virus (10A1 MLV) and some feline leukemia virus subgroup B (FeLV-B) variants. This is Sodium-dependent phosphate transporter 2 (SLC20A2) from Homo sapiens (Human).